A 227-amino-acid polypeptide reads, in one-letter code: Uracil-DNA glycosylase (227 aa).

Residue aspartate 68 is the Proton acceptor of the active site.

This sequence belongs to the uracil-DNA glycosylase (UDG) superfamily. UNG family.

It localises to the cytoplasm. It catalyses the reaction Hydrolyzes single-stranded DNA or mismatched double-stranded DNA and polynucleotides, releasing free uracil.. Functionally, excises uracil residues from the DNA which can arise as a result of misincorporation of dUMP residues by DNA polymerase or due to deamination of cytosine. This is Uracil-DNA glycosylase from Mycolicibacterium paratuberculosis (strain ATCC BAA-968 / K-10) (Mycobacterium paratuberculosis).